Here is a 377-residue protein sequence, read N- to C-terminus: Nitric oxide reductase FlRd-NAD(+) reductase (377 aa).

Belongs to the FAD-dependent oxidoreductase family. FAD serves as cofactor.

The protein resides in the cytoplasm. It catalyses the reaction 2 reduced [nitric oxide reductase rubredoxin domain] + NAD(+) + H(+) = 2 oxidized [nitric oxide reductase rubredoxin domain] + NADH. It functions in the pathway nitrogen metabolism; nitric oxide reduction. One of at least two accessory proteins for anaerobic nitric oxide (NO) reductase. Reduces the rubredoxin moiety of NO reductase. This is Nitric oxide reductase FlRd-NAD(+) reductase from Citrobacter koseri (strain ATCC BAA-895 / CDC 4225-83 / SGSC4696).